Reading from the N-terminus, the 170-residue chain is MDLKAHIAAVKDFPKEGILFRDITPLMLDGKAFKYASDQFTEFARSKKADLIVGPEARGFIFGCPVAVNLGVGFAPVRKPGKLPRASVTVSYDLEYGSNSLSLHEDAVKPGQRVVIIDDLLATGGTMQATVELVEKLGGIVVGLAFLIELDDLEGRKLLKNYDVKTLINY.

It belongs to the purine/pyrimidine phosphoribosyltransferase family. In terms of assembly, homodimer.

Its subcellular location is the cytoplasm. The catalysed reaction is AMP + diphosphate = 5-phospho-alpha-D-ribose 1-diphosphate + adenine. It functions in the pathway purine metabolism; AMP biosynthesis via salvage pathway; AMP from adenine: step 1/1. In terms of biological role, catalyzes a salvage reaction resulting in the formation of AMP, that is energically less costly than de novo synthesis. The chain is Adenine phosphoribosyltransferase from Acholeplasma laidlawii (strain PG-8A).